Reading from the N-terminus, the 179-residue chain is Adenine phosphoribosyltransferase (179 aa).

The protein belongs to the purine/pyrimidine phosphoribosyltransferase family. As to quaternary structure, homodimer.

Its subcellular location is the cytoplasm. The catalysed reaction is AMP + diphosphate = 5-phospho-alpha-D-ribose 1-diphosphate + adenine. It functions in the pathway purine metabolism; AMP biosynthesis via salvage pathway; AMP from adenine: step 1/1. In terms of biological role, catalyzes a salvage reaction resulting in the formation of AMP, that is energically less costly than de novo synthesis. This chain is Adenine phosphoribosyltransferase, found in Helicobacter pylori (strain G27).